Here is a 335-residue protein sequence, read N- to C-terminus: Cytoskeleton protein RodZ (335 aa).

The Cytoplasmic portion of the chain corresponds to 1-111; it reads MNTEATHDQN…LGKRRKKRDG (111 aa). The HTH cro/C1-type domain maps to 19-71; sequence LRNAREQLGLSQQAVAERLCLKVSTVRDIEEDKAPADLASTFLRGYIRSYARL. The H-T-H motif DNA-binding region spans 30–49; the sequence is QQAVAERLCLKVSTVRDIEE. A helical; Signal-anchor for type II membrane protein membrane pass occupies residues 112–132; that stretch reads WLMTFTWLVLFVVIGLSGAWW. Residues 133 to 335 lie on the Periplasmic side of the membrane; sequence WQDHKAQQEE…TLNAEQSPAQ (203 aa). Residues 148 to 164 show a composition bias toward polar residues; sequence DQSSAELNNNQSQSVPL. Residues 148 to 244 are disordered; sequence DQSSAELNNN…PLPTDQAGVT (97 aa). Low complexity-rich tracts occupy residues 165–205 and 217–239; these read DTST…DPQQ and DTAA…LPTD.

This sequence belongs to the RodZ family.

Its subcellular location is the cell inner membrane. Its function is as follows. Cytoskeletal protein that is involved in cell-shape control through regulation of the length of the long axis. This is Cytoskeleton protein RodZ from Escherichia coli O6:H1 (strain CFT073 / ATCC 700928 / UPEC).